We begin with the raw amino-acid sequence, 71 residues long: ATP synthase F(0) complex subunit e, mitochondrial (71 aa).

An N6-acetyllysine modification is found at Lys34. A Phosphoserine modification is found at Ser68.

This sequence belongs to the ATPase e subunit family. Component of the ATP synthase complex composed at least of ATP5F1A/subunit alpha, ATP5F1B/subunit beta, ATP5MC1/subunit c (homooctomer), MT-ATP6/subunit a, MT-ATP8/subunit 8, ATP5ME/subunit e, ATP5MF/subunit f, ATP5MG/subunit g, ATP5MK/subunit k, ATP5MJ/subunit j, ATP5F1C/subunit gamma, ATP5F1D/subunit delta, ATP5F1E/subunit epsilon, ATP5PF/subunit F6, ATP5PB/subunit b, ATP5PD/subunit d, ATP5PO/subunit OSCP. ATP synthase complex consists of a soluble F(1) head domain (subunits alpha(3) and beta(3)) - the catalytic core - and a membrane F(0) domain - the membrane proton channel (subunits c, a, 8, e, f, g, k and j). These two domains are linked by a central stalk (subunits gamma, delta, and epsilon) rotating inside the F1 region and a stationary peripheral stalk (subunits F6, b, d, and OSCP).

It localises to the mitochondrion. The protein resides in the mitochondrion inner membrane. Subunit e, of the mitochondrial membrane ATP synthase complex (F(1)F(0) ATP synthase or Complex V) that produces ATP from ADP in the presence of a proton gradient across the membrane which is generated by electron transport complexes of the respiratory chain. ATP synthase complex consist of a soluble F(1) head domain - the catalytic core - and a membrane F(1) domain - the membrane proton channel. These two domains are linked by a central stalk rotating inside the F(1) region and a stationary peripheral stalk. During catalysis, ATP synthesis in the catalytic domain of F(1) is coupled via a rotary mechanism of the central stalk subunits to proton translocation. In vivo, can only synthesize ATP although its ATP hydrolase activity can be activated artificially in vitro. Part of the complex F(0) domain. The sequence is that of ATP synthase F(0) complex subunit e, mitochondrial from Sus scrofa (Pig).